Reading from the N-terminus, the 1025-residue chain is Multidrug resistance protein MdtC (1025 aa).

The next 12 helical transmembrane spans lie at 3–23 (FFAL…AITL), 333–353 (EVEQ…FLFL), 360–380 (IIPA…MYLC), 387–407 (LSLM…IVVL), 431–451 (VGFT…PLLL), 463–483 (FAVT…TLTP), 528–548 (LVGV…ISIP), 853–873 (VILI…LYES), 875–895 (VHPL…LLAL), 897–917 (LFNA…IGIV), 953–973 (PIMM…LSGG), and 984–1004 (ITIV…TPVV).

Belongs to the resistance-nodulation-cell division (RND) (TC 2.A.6) family. MdtC subfamily. In terms of assembly, part of a tripartite efflux system composed of MdtA, MdtB and MdtC. MdtC forms a heteromultimer with MdtB.

It is found in the cell inner membrane. In terms of biological role, the MdtABC tripartite complex confers resistance against novobiocin and deoxycholate. This Escherichia coli (strain UTI89 / UPEC) protein is Multidrug resistance protein MdtC.